Reading from the N-terminus, the 198-residue chain is MAEEFLNTHNASILLSAANKSHYPQDDLPEVALAGRSNVGKSSFINTLLGRKNLARTSSKPGKTQLLNFYNIDDKLRFVDVPGYGYAKVSKTERAKWGKMIEEYLVTRDNLRVVVSLVDFRHDPSADDIQIYEFLKYYEIPVIIVATKADKIPRGKWNKHESSIKKKLNFDKKDHFIVFSSVDRTGLDESWDTILSEL.

The region spanning 27-198 (DLPEVALAGR…ESWDTILSEL (172 aa)) is the EngB-type G domain. Residues 35–42 (GRSNVGKS), 62–66 (GKTQL), 80–83 (DVPG), 147–150 (TKAD), and 179–181 (FSS) each bind GTP. Residues S42 and T64 each contribute to the Mg(2+) site.

This sequence belongs to the TRAFAC class TrmE-Era-EngA-EngB-Septin-like GTPase superfamily. EngB GTPase family. Requires Mg(2+) as cofactor.

Necessary for normal cell division and for the maintenance of normal septation. The protein is Probable GTP-binding protein EngB of Streptococcus agalactiae serotype III (strain NEM316).